Consider the following 275-residue polypeptide: Dermonecrotic toxin SpeSicTox-betaIIA2i (275 aa).

Histidine 5 is a catalytic residue. Positions 25 and 27 each coordinate Mg(2+). The active-site Nucleophile is histidine 41. Disulfide bonds link cysteine 45–cysteine 51 and cysteine 47–cysteine 190. Aspartate 85 is a binding site for Mg(2+).

This sequence belongs to the arthropod phospholipase D family. Class II subfamily. It depends on Mg(2+) as a cofactor. As to expression, expressed by the venom gland.

The protein resides in the secreted. The enzyme catalyses an N-(acyl)-sphingosylphosphocholine = an N-(acyl)-sphingosyl-1,3-cyclic phosphate + choline. It catalyses the reaction an N-(acyl)-sphingosylphosphoethanolamine = an N-(acyl)-sphingosyl-1,3-cyclic phosphate + ethanolamine. It carries out the reaction a 1-acyl-sn-glycero-3-phosphocholine = a 1-acyl-sn-glycero-2,3-cyclic phosphate + choline. The catalysed reaction is a 1-acyl-sn-glycero-3-phosphoethanolamine = a 1-acyl-sn-glycero-2,3-cyclic phosphate + ethanolamine. In terms of biological role, dermonecrotic toxins cleave the phosphodiester linkage between the phosphate and headgroup of certain phospholipids (sphingolipid and lysolipid substrates), forming an alcohol (often choline) and a cyclic phosphate. This toxin acts on sphingomyelin (SM). It may also act on ceramide phosphoethanolamine (CPE), lysophosphatidylcholine (LPC) and lysophosphatidylethanolamine (LPE), but not on lysophosphatidylserine (LPS), and lysophosphatidylglycerol (LPG). It acts by transphosphatidylation, releasing exclusively cyclic phosphate products as second products. Induces dermonecrosis, hemolysis, increased vascular permeability, edema, inflammatory response, and platelet aggregation. In Sicarius peruensis (Six-eyed sand spider), this protein is Dermonecrotic toxin SpeSicTox-betaIIA2i.